Reading from the N-terminus, the 177-residue chain is uncharacterized protein (177 aa).

The region spanning 10–177 is the N-acetyltransferase domain; sequence LILRQITDQD…NVYSIVKPRE (168 aa).

It belongs to the acetyltransferase family.

This is an uncharacterized protein from Bacillus subtilis (strain 168).